Consider the following 138-residue polypeptide: NADH dehydrogenase [ubiquinone] iron-sulfur protein 2, mitochondrial (138 aa).

It belongs to the complex I 49 kDa subunit family. Core subunit of respiratory chain NADH dehydrogenase (Complex I) which is composed of 45 different subunits. Component of the iron-sulfur (IP) fragment of the enzyme. Interacts with NDUFAF3. Interacts with NDUFAF7. Interacts with CERS2. [4Fe-4S] cluster is required as a cofactor. Post-translationally, dimethylation at Arg-118 by NDUFAF7 takes place after NDUFS2 assembles into the complex I, leading to stabilize the early intermediate complex.

It is found in the mitochondrion inner membrane. The enzyme catalyses a ubiquinone + NADH + 5 H(+)(in) = a ubiquinol + NAD(+) + 4 H(+)(out). Its function is as follows. Core subunit of the mitochondrial membrane respiratory chain NADH dehydrogenase (Complex I) which catalyzes electron transfer from NADH through the respiratory chain, using ubiquinone as an electron acceptor. Essential for the catalytic activity and assembly of complex I. Redox-sensitive, critical component of the oxygen-sensing pathway in the pulmonary vasculature which plays a key role in acute pulmonary oxygen-sensing and hypoxic pulmonary vasoconstriction. Plays an important role in carotid body sensing of hypoxia. Essential for glia-like neural stem and progenitor cell proliferation, differentiation and subsequent oligodendrocyte or neuronal maturation. This Mesocricetus auratus (Golden hamster) protein is NADH dehydrogenase [ubiquinone] iron-sulfur protein 2, mitochondrial.